Reading from the N-terminus, the 222-residue chain is Glutathione S-transferase A1 (222 aa).

At M1 the chain carries N-acetylmethionine. A2 carries the N-acetylalanine; in Glutathione S-transferase A1, N-terminally processed modification. The GST N-terminal domain occupies 3–83; that stretch reads GKPTLHYFNG…YIATKYNLYG (81 aa). K4 is modified (N6-succinyllysine). Glutathione contacts are provided by residues Y9, K45, 54 to 55, and 67 to 68; these read QV and QT. The GST C-terminal domain occupies 85–208; sequence DMKERALIDM…QPGSQRKPPT (124 aa).

Belongs to the GST superfamily. Alpha family. In terms of assembly, homodimer or heterodimer of GSTA1 and GSTA2. Expressed in corpus luteum, adrenal gland, testis, liver, lung, thyroid and kidney.

Its subcellular location is the cytoplasm. The enzyme catalyses RX + glutathione = an S-substituted glutathione + a halide anion + H(+). It catalyses the reaction prostaglandin A2 + glutathione = prostaglandin A2-S-(R)-glutathione. The catalysed reaction is prostaglandin J2 + glutathione = prostaglandin J2-S-(R)-glutathione. It carries out the reaction (13S)-hydroperoxy-(9Z,11E)-octadecadienoate + 2 glutathione = (13S)-hydroxy-(9Z,11E)-octadecadienoate + glutathione disulfide + H2O. The enzyme catalyses androst-5-ene-3,17-dione = androst-4-ene-3,17-dione. Functionally, glutathione S-transferase that catalyzes the nucleophilic attack of the sulfur atom of glutathione on the electrophilic groups of a wide range of exogenous and endogenous compounds. Involved in the formation of glutathione conjugates of both prostaglandin A2 (PGA2) and prostaglandin J2 (PGJ2). It also catalyzes the isomerization of D5-androstene-3,17-dione (AD) into D4-androstene-3,17-dione and may therefore play an important role in hormone biosynthesis. Through its glutathione-dependent peroxidase activity toward the fatty acid hydroperoxide (13S)-hydroperoxy-(9Z,11E)-octadecadienoate/13-HPODE it is also involved in the metabolism of oxidized linoleic acid. The chain is Glutathione S-transferase A1 (GSTA1) from Bos taurus (Bovine).